A 521-amino-acid polypeptide reads, in one-letter code: NADH-quinone oxidoreductase subunit N (521 aa).

The next 14 membrane-spanning stretches (helical) occupy residues 15-35 (LAPE…DLIL), 43-63 (IIGW…IWRM), 98-118 (LLKI…LGST), 128-148 (AEFY…ASSG), 150-170 (LVTL…LVGL), 185-205 (VVTG…LYGV), 227-247 (ALVY…IAAA), 261-281 (PTPV…AAVF), 303-323 (VFFA…VSAL), 331-351 (LLAL…AISV), 363-383 (VFYL…VTVI), 406-426 (AAAM…AGFF), 442-462 (WLVA…FGII), and 485-505 (TVIW…GPLM).

Belongs to the complex I subunit 2 family. In terms of assembly, NDH-1 is composed of 14 different subunits. Subunits NuoA, H, J, K, L, M, N constitute the membrane sector of the complex.

It is found in the cell membrane. The enzyme catalyses a quinone + NADH + 5 H(+)(in) = a quinol + NAD(+) + 4 H(+)(out). NDH-1 shuttles electrons from NADH, via FMN and iron-sulfur (Fe-S) centers, to quinones in the respiratory chain. The immediate electron acceptor for the enzyme in this species is believed to be a menaquinone. Couples the redox reaction to proton translocation (for every two electrons transferred, four hydrogen ions are translocated across the cytoplasmic membrane), and thus conserves the redox energy in a proton gradient. The chain is NADH-quinone oxidoreductase subunit N from Paenibacillus sp. (strain JDR-2).